The primary structure comprises 1063 residues: Kinesin-like protein KIN-7H (1063 aa).

In terms of domain architecture, Kinesin motor spans 18–342 (KIYVSVRMRP…LLFASCAKEV (325 aa)). 106 to 113 (GQTSSGKT) contributes to the ATP binding site. The stretch at 351–436 (VMSDKALVKH…KNQEKETLST (86 aa)) forms a coiled coil. The segment at 574-664 (SDISIGPVEN…ESNLTKNPAL (91 aa)) is disordered.

This sequence belongs to the TRAFAC class myosin-kinesin ATPase superfamily. Kinesin family. KIN-7 subfamily.

The polypeptide is Kinesin-like protein KIN-7H (Arabidopsis thaliana (Mouse-ear cress)).